The following is a 179-amino-acid chain: Large ribosomal subunit protein uL5 (179 aa).

It belongs to the universal ribosomal protein uL5 family. In terms of assembly, part of the 50S ribosomal subunit; part of the 5S rRNA/L5/L18/L25 subcomplex. Contacts the 5S rRNA and the P site tRNA. Forms a bridge to the 30S subunit in the 70S ribosome.

Its function is as follows. This is one of the proteins that bind and probably mediate the attachment of the 5S RNA into the large ribosomal subunit, where it forms part of the central protuberance. In the 70S ribosome it contacts protein S13 of the 30S subunit (bridge B1b), connecting the 2 subunits; this bridge is implicated in subunit movement. Contacts the P site tRNA; the 5S rRNA and some of its associated proteins might help stabilize positioning of ribosome-bound tRNAs. In Marinomonas sp. (strain MWYL1), this protein is Large ribosomal subunit protein uL5.